A 394-amino-acid polypeptide reads, in one-letter code: Elongation factor Tu 2 (394 aa).

A tr-type G domain is found at 10 to 204; sequence KPHVNVGTIG…FLDSYIPEPE (195 aa). A G1 region spans residues 19-26; sequence GHVDHGKT. 19–26 is a binding site for GTP; the sequence is GHVDHGKT. Thr26 is a Mg(2+) binding site. Residues 60-64 are G2; the sequence is GITIN. The G3 stretch occupies residues 81–84; it reads DCPG. Residues 81–85 and 136–139 each bind GTP; these read DCPGH and NKCD. A G4 region spans residues 136–139; it reads NKCD. Positions 174-176 are G5; that stretch reads SAL.

Belongs to the TRAFAC class translation factor GTPase superfamily. Classic translation factor GTPase family. EF-Tu/EF-1A subfamily. As to quaternary structure, monomer.

Its subcellular location is the cytoplasm. The catalysed reaction is GTP + H2O = GDP + phosphate + H(+). GTP hydrolase that promotes the GTP-dependent binding of aminoacyl-tRNA to the A-site of ribosomes during protein biosynthesis. The sequence is that of Elongation factor Tu 2 from Escherichia coli O139:H28 (strain E24377A / ETEC).